Here is an 84-residue protein sequence, read N- to C-terminus: Beta-cardiotoxin CTX27 (84 aa).

An N-terminal signal peptide occupies residues 1-21 (MKTLLLTLVVVTIVCLDLGYT). 4 disulfides stabilise this stretch: C24-C43, C36-C61, C65-C76, and C77-C82.

Belongs to the three-finger toxin family. Short-chain subfamily. Aminergic toxin sub-subfamily. Expressed by the venom gland.

It localises to the secreted. Functionally, acts as a beta-blocker by binding to beta-1 and beta-2 adrenergic receptors (ADRB1 and ADRB2). It dose-dependently decreases the heart rate (bradycardia), whereas conventional cardiotoxins increases it. At 100 mg/kg, intraperitoneal injection into mice provokes labored breathing, impaired locomotion, lack of response to external stimuli, and death (after 30 minutes). In Ophiophagus hannah (King cobra), this protein is Beta-cardiotoxin CTX27.